We begin with the raw amino-acid sequence, 1462 residues long: Serine/threonine-protein kinase HSL1 (1462 aa).

Disordered regions lie at residues 1 to 26 and 41 to 69; these read MSTV…SSSM and RLSQ…KLGR. The 266-residue stretch at 65–330 folds into the Protein kinase domain; sequence WKLGRTLGRG…IDAILTHPLL (266 aa). ATP contacts are provided by residues 71–79 and lysine 94; that span reads LGRGSTGRV. Aspartate 201 acts as the Proton acceptor in catalysis. 6 disordered regions span residues 412 to 450, 471 to 540, 598 to 637, 992 to 1031, 1095 to 1230, and 1269 to 1321; these read SNSF…HTTV, SAKG…TSVN, ENSK…TWSL, EDEE…NYDF, KETL…QQTK, and NRAA…LQKE. Composition is skewed to polar residues over residues 428-440 and 471-487; these read PRST…TVTD and SAKG…PNTP. Residues 510–526 show a composition bias toward low complexity; that stretch reads ASRSRNASSRSLKSNSS. Polar residues predominate over residues 527 to 540; that stretch reads TGRNGNNASVTSVN. Residues 610–620 are compositionally biased toward pro residues; that stretch reads QLPPPPPPPIE. The stretch at 636–715 forms a coiled coil; the sequence is SLARRERELA…KLQKHQSAHD (80 aa). Over residues 1095-1130 the composition is skewed to basic and acidic residues; the sequence is KETLLKNHSSDEATIEVKEDNNEHDFNDKIKQHYDD. The span at 1131-1153 shows a compositional bias: acidic residues; sequence NGDSEEDDEDEDEEEEDDDDDDD. 3 stretches are compositionally biased toward polar residues: residues 1165–1176, 1197–1218, and 1292–1302; these read HNYSLAEITSES, STGI…NNGD, and NISQPLSSPTK.

The protein belongs to the protein kinase superfamily. CAMK Ser/Thr protein kinase family. NIM1 subfamily. Phosphorylated throughout the cell cycle, except for the G1 phase.

The protein localises to the bud neck. It carries out the reaction L-seryl-[protein] + ATP = O-phospho-L-seryl-[protein] + ADP + H(+). The enzyme catalyses L-threonyl-[protein] + ATP = O-phospho-L-threonyl-[protein] + ADP + H(+). Its function is as follows. Protein kinase involved in determination of morphology during the cell cycle of both yeast-form and hyphal cells via regulation of SWE1 and CDC28. Regulates pseudohypha formation, but is not required for septin ring organization or septum formation. Plays an essential role in virulence in a mouse model. The polypeptide is Serine/threonine-protein kinase HSL1 (HSL1) (Candida albicans (strain SC5314 / ATCC MYA-2876) (Yeast)).